A 967-amino-acid polypeptide reads, in one-letter code: MSSFHQNSSYMEDADYPGYSGSRNHTHNYLETQDYPEFPGSQNNPGFHHPRSNPHSSGSRTNPDYPYFQEEPDYPGSLSNTVYQDTRSHPFSAHSRTRPDYESSIEPDYNDFRSESYHAGLPMEPDYPGSQSHPGFAGVGRSSMNYTGPRTNLGYLGSLEEPDYPGAQDNSYYHSGSRPHSNLPGSRRDAGYAGSRINSYPDDLGEPDYPGAENQPNSPRFYGKPDYPGAEEGDGYSSSKSLAVIRRGNGPFGMLGRRNEDYPEGIGMVSMEMAGDPRNGYVNPAYTRRISPVCPDRNLLLCAHDWHTSVQGQKLIASLIPMTTRDRIKTIRNQPRTMQEKRELRKIVDKEKNKQSHGILEANCCAQCLGSLSLTYRRTRNGLSELLNYITLWQKRFKVIGGKFGTSVLSYFSFLRWLLKFNIFSFVMNFSFIIIPQFTVGAKNTLQFTGLEFFTGAGYFGDTVMYYGFYTNSTIRHRMGGASYNMQLAYIFTIGACLVVCFFSLLFSMAKYFRNNFINPHIYSRGIAKLIFCWDFTVTHEKAVKLKQKNLSTEIRENLSELRQENYRLTFNQQLTRFSAHVAAWLVSTGVTAACCVAVYYLAEYNSEFLKTHRNPGAVLLLPFVVSCINLAVPRFYSMFRLVERYEIPRQEVYVLLVRNIFLKISIVGILCYYWLNIVALSGEECWETLIGQDIYRLLLMDFVFSLADSLLGEFLRRLIGMKFTSLSLQEFDIARNVLELIYAQTLTWLGIFFCPLLPFIQMITLFIMFYVKNVSLMMNFQPPSKAWRASQMITFFIFLLFFPSFTGVLCTLAITIWRLKPSADCGPFRGLPSFIQSIYSWIDTLSRRPGYLWVVWIYQNLIGSVHFFFILTLIVLIITYLYWQITEGRKVMIRLLHEQIINEGKDKMFLIEKLTKLQDMEKRVNPSALDLERREVEPQIPLHLEELGAAPDLRLRRSAQEENPIA.

4 stretches are compositionally biased toward polar residues: residues 1–10, 21–31, 53–62, and 168–184; these read MSSFHQNSSY, GSRNHTHNYLE, NPHSSGSRTN, and QDNS…SNLP. Positions 1–240 are disordered; that stretch reads MSSFHQNSSY…EEGDGYSSSK (240 aa). The Extracellular portion of the chain corresponds to 1–420; it reads MSSFHQNSSY…YFSFLRWLLK (420 aa). A helical transmembrane segment spans residues 421–441; the sequence is FNIFSFVMNFSFIIIPQFTVG. Over 442–449 the chain is Cytoplasmic; the sequence is AKNTLQFT. A helical membrane pass occupies residues 450–470; the sequence is GLEFFTGAGYFGDTVMYYGFY. Over 471 to 487 the chain is Extracellular; it reads TNSTIRHRMGGASYNMQ. Residues 488–508 traverse the membrane as a helical segment; that stretch reads LAYIFTIGACLVVCFFSLLFS. Topologically, residues 509-581 are cytoplasmic; the sequence is MAKYFRNNFI…NQQLTRFSAH (73 aa). A helical transmembrane segment spans residues 582–602; the sequence is VAAWLVSTGVTAACCVAVYYL. The Extracellular portion of the chain corresponds to 603–616; it reads AEYNSEFLKTHRNP. A helical membrane pass occupies residues 617-637; that stretch reads GAVLLLPFVVSCINLAVPRFY. The Cytoplasmic segment spans residues 638-660; it reads SMFRLVERYEIPRQEVYVLLVRN. A helical membrane pass occupies residues 661 to 681; sequence IFLKISIVGILCYYWLNIVAL. The Extracellular segment spans residues 682-694; the sequence is SGEECWETLIGQD. Residues 695 to 715 traverse the membrane as a helical segment; the sequence is IYRLLLMDFVFSLADSLLGEF. Residues 716–749 lie on the Cytoplasmic side of the membrane; the sequence is LRRLIGMKFTSLSLQEFDIARNVLELIYAQTLTW. Residues 750-770 traverse the membrane as a helical segment; it reads LGIFFCPLLPFIQMITLFIMF. Topologically, residues 771–796 are extracellular; it reads YVKNVSLMMNFQPPSKAWRASQMITF. The chain crosses the membrane as a helical span at residues 797–817; sequence FIFLLFFPSFTGVLCTLAITI. The Cytoplasmic portion of the chain corresponds to 818–861; the sequence is WRLKPSADCGPFRGLPSFIQSIYSWIDTLSRRPGYLWVVWIYQN. A helical membrane pass occupies residues 862-882; the sequence is LIGSVHFFFILTLIVLIITYL. Residues 883–967 are Extracellular-facing; sequence YWQITEGRKV…RSAQEENPIA (85 aa).

This sequence belongs to the TMC family. In terms of tissue distribution, ubiquitously expressed.

Its subcellular location is the membrane. In terms of biological role, probable component of an ion channel. Molecular function hasn't been characterized yet. The sequence is that of Transmembrane channel-like protein 5 from Mus musculus (Mouse).